A 792-amino-acid chain; its full sequence is Kinesin-like protein KIFC2 (792 aa).

2 disordered regions span residues 22 to 45 (AAAV…RRRP) and 142 to 184 (QGTQ…QEHQ). Polar residues predominate over residues 142-169 (QGTQPTCPVQPSTLDGSLSQEESSSQPT). A coiled-coil region spans residues 186-347 (LQLEEEQRVW…ARMASLRQGC (162 aa)). Residues 409-732 (NIRVLCRLRP…LKFAERVGQV (324 aa)) form the Kinesin motor domain. Residue 486 to 493 (GQTGTGKT) participates in ATP binding. Positions 734-792 (LGPARRRRAPRSGTPSSLSTDTPLTGTSCTPTPSPGSPPSTSPNSCSGLTLEPPGDPPP) are disordered. Over residues 744–764 (RSGTPSSLSTDTPLTGTSCTP) the composition is skewed to low complexity. The segment covering 765–774 (TPSPGSPPST) has biased composition (pro residues).

It belongs to the TRAFAC class myosin-kinesin ATPase superfamily. Kinesin family. Present in axons and dendrites of neurons in the central and peripheral nervous systems.

It localises to the cytoplasm. The protein localises to the cytoskeleton. In terms of biological role, may play a role in microtubule-dependent retrograde axonal transport. May function as the motor for the transport of multivesicular body (MVB)-like organelles in dendrites. The chain is Kinesin-like protein KIFC2 (Kifc2) from Mus musculus (Mouse).